Here is a 287-residue protein sequence, read N- to C-terminus: Cell division protein ZipA (287 aa).

A topological domain (periplasmic) is located at residue M1. Residues 2 to 22 traverse the membrane as a helical segment; sequence EIGLREWLIVIGIIVIAGILF. Topologically, residues 23-287 are cytoplasmic; sequence DGWRRMRGSK…ERRALTQRRG (265 aa). The tract at residues 48-140 is disordered; that stretch reads DEEETTSAEV…PTQRITEDKD (93 aa). Composition is skewed to basic and acidic residues over residues 64 to 77, 85 to 104, and 121 to 140; these read LDTH…EHDL, REGK…KDEP, and GRDD…EDKD.

It belongs to the ZipA family. Interacts with FtsZ via their C-terminal domains.

The protein resides in the cell inner membrane. In terms of biological role, essential cell division protein that stabilizes the FtsZ protofilaments by cross-linking them and that serves as a cytoplasmic membrane anchor for the Z ring. Also required for the recruitment to the septal ring of downstream cell division proteins. The chain is Cell division protein ZipA from Pseudomonas syringae pv. syringae (strain B728a).